A 65-amino-acid polypeptide reads, in one-letter code: Large ribosomal subunit protein bL35 (65 aa).

It belongs to the bacterial ribosomal protein bL35 family.

The polypeptide is Large ribosomal subunit protein bL35 (Synechococcus sp. (strain WH7803)).